The following is a 151-amino-acid chain: Transcriptional repressor NrdR (151 aa).

A zinc finger spans residues 3-34 (CPYCGYGESKVVDSRATDDKMAIRRRRECLKC). The ATP-cone domain occupies 49-139 (LLVIKKNMSR…VYRQFKDINT (91 aa)).

It belongs to the NrdR family. Requires Zn(2+) as cofactor.

Functionally, negatively regulates transcription of bacterial ribonucleotide reductase nrd genes and operons by binding to NrdR-boxes. This Clostridium kluyveri (strain NBRC 12016) protein is Transcriptional repressor NrdR.